The sequence spans 459 residues: tRNA modification GTPase MnmE (459 aa).

Positions 21, 84, and 123 each coordinate (6S)-5-formyl-5,6,7,8-tetrahydrofolate. Residues 219–380 (GMLTVIVGQP…LEKEIKQRVY (162 aa)) enclose the TrmE-type G domain. K(+) is bound at residue Asn229. GTP-binding positions include 229 to 234 (NVGKSS), 248 to 254 (TDIPGTT), and 273 to 276 (DTAG). Position 233 (Ser233) interacts with Mg(2+). Residues Thr248, Ile250, and Thr253 each coordinate K(+). Thr254 is a binding site for Mg(2+). Lys459 is a (6S)-5-formyl-5,6,7,8-tetrahydrofolate binding site.

This sequence belongs to the TRAFAC class TrmE-Era-EngA-EngB-Septin-like GTPase superfamily. TrmE GTPase family. Homodimer. Heterotetramer of two MnmE and two MnmG subunits. The cofactor is K(+).

The protein localises to the cytoplasm. Functionally, exhibits a very high intrinsic GTPase hydrolysis rate. Involved in the addition of a carboxymethylaminomethyl (cmnm) group at the wobble position (U34) of certain tRNAs, forming tRNA-cmnm(5)s(2)U34. The polypeptide is tRNA modification GTPase MnmE (Desulfitobacterium hafniense (strain Y51)).